Consider the following 147-residue polypeptide: Ribonuclease VapC43 (147 aa).

The region spanning 3–139 is the PINc domain; it reads CVDVNVLVYA…ARFRRLRWRH (137 aa). The Mg(2+) site is built by D5 and D108.

The protein belongs to the PINc/VapC protein family. Mg(2+) is required as a cofactor.

Toxic component of a type II toxin-antitoxin (TA) system. An RNase. Its toxic effect is neutralized by coexpression with cognate antitoxin VapB43. In Mycobacterium tuberculosis (strain CDC 1551 / Oshkosh), this protein is Ribonuclease VapC43.